A 733-amino-acid chain; its full sequence is Phosphoribosylformylglycinamidine synthase subunit PurL (733 aa).

The active site involves histidine 41. Tyrosine 44 and lysine 83 together coordinate ATP. Glutamate 85 lines the Mg(2+) pocket. Substrate is bound by residues 86 to 89 (SHNH) and arginine 108. Catalysis depends on histidine 87, which acts as the Proton acceptor. Mg(2+) is bound at residue aspartate 109. The tract at residues 212–232 (GASFASQELSEESEEKRPSVQ) is disordered. Position 232 (glutamine 232) interacts with substrate. A Mg(2+)-binding site is contributed by aspartate 260. 304-306 (ESQ) lines the substrate pocket. Positions 488 and 525 each coordinate ATP. Asparagine 526 contacts Mg(2+). A substrate-binding site is contributed by serine 528.

It belongs to the FGAMS family. Monomer. Part of the FGAM synthase complex composed of 1 PurL, 1 PurQ and 2 PurS subunits.

The protein localises to the cytoplasm. It carries out the reaction N(2)-formyl-N(1)-(5-phospho-beta-D-ribosyl)glycinamide + L-glutamine + ATP + H2O = 2-formamido-N(1)-(5-O-phospho-beta-D-ribosyl)acetamidine + L-glutamate + ADP + phosphate + H(+). The protein operates within purine metabolism; IMP biosynthesis via de novo pathway; 5-amino-1-(5-phospho-D-ribosyl)imidazole from N(2)-formyl-N(1)-(5-phospho-D-ribosyl)glycinamide: step 1/2. Its function is as follows. Part of the phosphoribosylformylglycinamidine synthase complex involved in the purines biosynthetic pathway. Catalyzes the ATP-dependent conversion of formylglycinamide ribonucleotide (FGAR) and glutamine to yield formylglycinamidine ribonucleotide (FGAM) and glutamate. The FGAM synthase complex is composed of three subunits. PurQ produces an ammonia molecule by converting glutamine to glutamate. PurL transfers the ammonia molecule to FGAR to form FGAM in an ATP-dependent manner. PurS interacts with PurQ and PurL and is thought to assist in the transfer of the ammonia molecule from PurQ to PurL. In Caldanaerobacter subterraneus subsp. tengcongensis (strain DSM 15242 / JCM 11007 / NBRC 100824 / MB4) (Thermoanaerobacter tengcongensis), this protein is Phosphoribosylformylglycinamidine synthase subunit PurL.